A 24-amino-acid chain; its full sequence is Coenzyme PQQ synthesis protein A (24 aa).

The pyrroloquinoline quinone (Glu-Tyr) cross-link spans 16–20 (EITMY).

Belongs to the PqqA family.

It participates in cofactor biosynthesis; pyrroloquinoline quinone biosynthesis. Its function is as follows. Required for coenzyme pyrroloquinoline quinone (PQQ) biosynthesis. PQQ is probably formed by cross-linking a specific glutamate to a specific tyrosine residue and excising these residues from the peptide. This chain is Coenzyme PQQ synthesis protein A, found in Variovorax paradoxus (strain S110).